A 350-amino-acid chain; its full sequence is Kelch domain-containing protein 8A (350 aa).

Kelch repeat units follow at residues 1-31 (MEVP…ETGG), 32-79 (QVYA…ALGK), 81-127 (IMVI…AKDY), 128-175 (RVYA…LRGS), 176-222 (KIYV…TLDN), 224-278 (LYSL…SLSG), and 279-326 (RVIV…VVKN).

In Homo sapiens (Human), this protein is Kelch domain-containing protein 8A (KLHDC8A).